Reading from the N-terminus, the 472-residue chain is Homeobox protein PKNOX2 (472 aa).

A disordered region spans residues 1–62 (MMQHASPAPA…STPVPSAPID (62 aa)). Over residues 26-38 (DSPQMTATTQPPS) the composition is skewed to polar residues. Over residues 46 to 56 (SAPSAAASTPV) the composition is skewed to low complexity. In terms of domain architecture, MEIS N-terminal spans 96–179 (GSECITSASF…MHSDNLLRND (84 aa)). The segment at residues 291–350 (KRGVLPKHATNIMRSWLFQHLMHPYPTEDEKRQIAAQTNLTLLQVNNWFVNARRRILQPM) is a DNA-binding region (homeobox). 3 disordered regions span residues 351–371 (LDAS…QHRP), 386–405 (QQQG…LDNL), and 423–472 (AAHD…DSLV). Positions 361-371 (KAKKIKSQHRP) are enriched in basic residues. Over residues 396 to 405 (PDGSINLDNL) the composition is skewed to polar residues. A compositionally biased stretch (acidic residues) spans 429-454 (LDGTEEEDEDEMEEEEEEELEEEVDE).

It belongs to the TALE/MEIS homeobox family.

The protein localises to the nucleus. This Pongo abelii (Sumatran orangutan) protein is Homeobox protein PKNOX2 (PKNOX2).